A 226-amino-acid polypeptide reads, in one-letter code: MTTTELVALLHLASPALPIGAYSYSQGLEAALDANLIHDADTARDWIASGLTDVLAHGELPFLAHQLARWHAHDTPALVTENAWFIASRESAELRRETEQMGWSLAQLCASLEWGDAARRATLAAMTPIALPTAFAYAAAAHDASADAVLAAYAFGWVENQTSAALKAVPLGQLAGQRIIVALRGAIDAAVRRALATPPDAVNTFAPQLGILSARHETQYSRLFRS.

Belongs to the UreF family. In terms of assembly, ureD, UreF and UreG form a complex that acts as a GTP-hydrolysis-dependent molecular chaperone, activating the urease apoprotein by helping to assemble the nickel containing metallocenter of UreC. The UreE protein probably delivers the nickel.

It localises to the cytoplasm. Functionally, required for maturation of urease via the functional incorporation of the urease nickel metallocenter. This is Urease accessory protein UreF from Burkholderia lata (strain ATCC 17760 / DSM 23089 / LMG 22485 / NCIMB 9086 / R18194 / 383).